Here is a 237-residue protein sequence, read N- to C-terminus: Ribonuclease PH (237 aa).

Residues arginine 86 and 124–126 (GTR) contribute to the phosphate site.

This sequence belongs to the RNase PH family. Homohexameric ring arranged as a trimer of dimers.

The catalysed reaction is tRNA(n+1) + phosphate = tRNA(n) + a ribonucleoside 5'-diphosphate. Its function is as follows. Phosphorolytic 3'-5' exoribonuclease that plays an important role in tRNA 3'-end maturation. Removes nucleotide residues following the 3'-CCA terminus of tRNAs; can also add nucleotides to the ends of RNA molecules by using nucleoside diphosphates as substrates, but this may not be physiologically important. Probably plays a role in initiation of 16S rRNA degradation (leading to ribosome degradation) during starvation. The protein is Ribonuclease PH of Roseobacter denitrificans (strain ATCC 33942 / OCh 114) (Erythrobacter sp. (strain OCh 114)).